Here is a 264-residue protein sequence, read N- to C-terminus: Apolipoprotein A-I (264 aa).

The first 18 residues, 1–18, serve as a signal peptide directing secretion; that stretch reads MRGVLVTLAVLFLTGTQA. Repeat copies occupy residues 67-88 and 89-110. Residues 67–264 are 10 X approximate tandem repeats; that stretch reads LKLADNLDTL…LLDEVQKTMA (198 aa). One copy of the 3; half-length repeat lies at 111 to 121; that stretch reads KDLEEVKEKIR. Repeat copies occupy residues 122–143, 144–165, 166–187, 188–209, and 210–231. The stretch at 232-242 is one 9; half-length repeat; sequence PLVQEFKERLT. The stretch at 243–264 is repeat 10; it reads PYAENLKNRLIDLLDEVQKTMA.

It belongs to the apolipoprotein A1/A4/E family. As to expression, major protein of VLDL, HDL, LDL and in chylomicrons. Expressed in a number of tissues including liver, small intestine, lung, kidney, heart and muscle with highest expression in liver and small intestine.

Its subcellular location is the secreted. Its function is as follows. Participates in the reverse transport of cholesterol from tissues to the liver for excretion by promoting cholesterol efflux from tissues and by acting as a cofactor for the lecithin cholesterol acyltransferase (LCAT). In Coturnix japonica (Japanese quail), this protein is Apolipoprotein A-I (APOA1).